We begin with the raw amino-acid sequence, 296 residues long: 4-hydroxybenzoate octaprenyltransferase (296 aa).

Transmembrane regions (helical) follow at residues 28–48 (IGTL…SDGI), 51–71 (LAVL…GCVI), 102–122 (LLLT…LNHL), 143–163 (FFPI…PMAF), 174–194 (AWIL…VYAM), 212–232 (FGRY…LLMA), 233–253 (VLGA…IVLL), and 274–294 (FLAN…HTFF).

The protein belongs to the UbiA prenyltransferase family. Mg(2+) is required as a cofactor.

It localises to the cell inner membrane. It carries out the reaction all-trans-octaprenyl diphosphate + 4-hydroxybenzoate = 4-hydroxy-3-(all-trans-octaprenyl)benzoate + diphosphate. The protein operates within cofactor biosynthesis; ubiquinone biosynthesis. Functionally, catalyzes the prenylation of para-hydroxybenzoate (PHB) with an all-trans polyprenyl group. Mediates the second step in the final reaction sequence of ubiquinone-8 (UQ-8) biosynthesis, which is the condensation of the polyisoprenoid side chain with PHB, generating the first membrane-bound Q intermediate 3-octaprenyl-4-hydroxybenzoate. The polypeptide is 4-hydroxybenzoate octaprenyltransferase (Neisseria meningitidis serogroup B (strain ATCC BAA-335 / MC58)).